Here is a 465-residue protein sequence, read N- to C-terminus: Probable zinc metalloprotease PTT_17836 (465 aa).

The N-terminal stretch at 1–20 (MRSASTLAVCAATLLQIACS) is a signal peptide. N-linked (GlcNAc...) asparagine glycosylation occurs at N140. Residues H163, D183, and E216 each coordinate Zn(2+). An N-linked (GlcNAc...) asparagine glycan is attached at N231. Residue D243 coordinates Zn(2+). 6 N-linked (GlcNAc...) asparagine glycosylation sites follow: N272, N330, N378, N384, N421, and N426. In terms of domain architecture, Fibronectin type-III spans 371 to 464 (APTNVGVNTT…LPFPFGCARN (94 aa)).

The protein belongs to the peptidase M28 family. M28B subfamily. It depends on Zn(2+) as a cofactor.

The protein localises to the secreted. The polypeptide is Probable zinc metalloprotease PTT_17836 (Pyrenophora teres f. teres (strain 0-1) (Barley net blotch fungus)).